A 343-amino-acid chain; its full sequence is ELAV-like protein 3 (343 aa).

3 consecutive RRM domains span residues 35–113 (TNLI…YARP), 121–202 (ANLY…FANN), and 260–338 (WCIF…FKTS).

This sequence belongs to the RRM elav family.

RNA-binding protein that binds to AU-rich sequences (AREs) of target mRNAs. May also bind poly-A tracts via RRM 3. May be involved in neuronal differentiation and maintenance. The protein is ELAV-like protein 3 of Xenopus tropicalis (Western clawed frog).